Consider the following 282-residue polypeptide: uncharacterized protein (282 aa).

Belongs to the glycosyltransferase 2 family. WaaE/KdtX subfamily.

This is an uncharacterized protein from Rickettsia conorii (strain ATCC VR-613 / Malish 7).